A 496-amino-acid chain; its full sequence is Docking protein 3 (496 aa).

Residues L18–S38 are disordered. The region spanning P63–F179 is the PH domain. Residue S194 is modified to Phosphoserine. The 105-residue stretch at E213–L317 folds into the IRS-type PTB domain. The tract at residues R313–Q363 is disordered. Residues S330 and S364 each carry the phosphoserine modification. Y381 is subject to Phosphotyrosine. Residues P408–S447 are disordered. Phosphoserine is present on S425.

The protein belongs to the DOK family. Type A subfamily. In terms of assembly, on tyrosine phosphorylation, interacts with CSK and INPP5D/SHIP1 via their SH2 domains. Both Tyr-381 and Tyr-398 are required for interaction with INPP5D. Only Tyr-381 is required for interaction with CSK. Binds ABL1 through the PTB domain and in a kinase-dependent manner. Does not interact with RasGAP. Constitutively tyrosine-phosphorylated. Post-translationally, on IL2 stimulation, phosphorylated on C-terminal tyrosine residues possibly by Src kinases. Can also be phosphorylated by ABL1 kinase. Expressed in spleen.

It localises to the cytoplasm. The protein localises to the cell membrane. Functionally, DOK proteins are enzymatically inert adaptor or scaffolding proteins. They provide a docking platform for the assembly of multimolecular signaling complexes. DOK3 is a negative regulator of JNK signaling in B-cells through interaction with INPP5D/SHIP1. May modulate ABL1 function. In Homo sapiens (Human), this protein is Docking protein 3 (DOK3).